We begin with the raw amino-acid sequence, 247 residues long: D-alanyl-D-alanine dipeptidase (247 aa).

Residues His140 and Asp147 each coordinate Zn(2+). Glu215 serves as the catalytic Proton donor/acceptor. A Zn(2+)-binding site is contributed by His218.

The protein belongs to the peptidase M15D family. Zn(2+) serves as cofactor.

It localises to the cytoplasm. It carries out the reaction D-alanyl-D-alanine + H2O = 2 D-alanine. In terms of biological role, catalyzes hydrolysis of the D-alanyl-D-alanine dipeptide. May have a role in cell-wall turnover. The polypeptide is D-alanyl-D-alanine dipeptidase (Synechocystis sp. (strain ATCC 27184 / PCC 6803 / Kazusa)).